The following is a 102-amino-acid chain: RNA-binding protein Hfq (102 aa).

One can recognise a Sm domain in the interval 9-68; it reads DPFVNALRRERVPVSIYLVNGIKLQGQIESFDQFVILLKNTVSQMVYKHAISTVVPSRPV. The interval 63–102 is disordered; it reads VPSRPVSHHSNNAGGGASNNYHHGSNAQGSTAQQDSEETE. Low complexity predominate over residues 70 to 88; that stretch reads HHSNNAGGGASNNYHHGSN.

The protein belongs to the Hfq family. Homohexamer.

RNA chaperone that binds small regulatory RNA (sRNAs) and mRNAs to facilitate mRNA translational regulation in response to envelope stress, environmental stress and changes in metabolite concentrations. Also binds with high specificity to tRNAs. This Salmonella heidelberg (strain SL476) protein is RNA-binding protein Hfq.